The following is a 434-amino-acid chain: 3-phosphoshikimate 1-carboxyvinyltransferase (434 aa).

3-phosphoshikimate contacts are provided by Lys22, Ser23, and Arg27. Lys22 lines the phosphoenolpyruvate pocket. Gly93 and Arg121 together coordinate phosphoenolpyruvate. 3-phosphoshikimate is bound by residues Ser168, Ser169, Gln170, Ser199, Asp320, and Lys347. Residue Gln170 coordinates phosphoenolpyruvate. The active-site Proton acceptor is Asp320. Residues Arg351, Arg394, and Lys419 each coordinate phosphoenolpyruvate.

It belongs to the EPSP synthase family. In terms of assembly, monomer.

The protein localises to the cytoplasm. It carries out the reaction 3-phosphoshikimate + phosphoenolpyruvate = 5-O-(1-carboxyvinyl)-3-phosphoshikimate + phosphate. The protein operates within metabolic intermediate biosynthesis; chorismate biosynthesis; chorismate from D-erythrose 4-phosphate and phosphoenolpyruvate: step 6/7. Functionally, catalyzes the transfer of the enolpyruvyl moiety of phosphoenolpyruvate (PEP) to the 5-hydroxyl of shikimate-3-phosphate (S3P) to produce enolpyruvyl shikimate-3-phosphate and inorganic phosphate. The sequence is that of 3-phosphoshikimate 1-carboxyvinyltransferase from Burkholderia orbicola (strain AU 1054).